A 252-amino-acid polypeptide reads, in one-letter code: 5'-nucleotidase SurE (252 aa).

Residues Asp-8, Asp-9, Ser-39, and Asn-91 each contribute to the a divalent metal cation site.

This sequence belongs to the SurE nucleotidase family. Requires a divalent metal cation as cofactor.

It localises to the cytoplasm. The enzyme catalyses a ribonucleoside 5'-phosphate + H2O = a ribonucleoside + phosphate. Functionally, nucleotidase that shows phosphatase activity on nucleoside 5'-monophosphates. The protein is 5'-nucleotidase SurE of Bordetella petrii (strain ATCC BAA-461 / DSM 12804 / CCUG 43448).